Consider the following 957-residue polypeptide: Glycine dehydrogenase (decarboxylating) (957 aa).

K708 is modified (N6-(pyridoxal phosphate)lysine).

Belongs to the GcvP family. In terms of assembly, the glycine cleavage system is composed of four proteins: P, T, L and H. The cofactor is pyridoxal 5'-phosphate.

The enzyme catalyses N(6)-[(R)-lipoyl]-L-lysyl-[glycine-cleavage complex H protein] + glycine + H(+) = N(6)-[(R)-S(8)-aminomethyldihydrolipoyl]-L-lysyl-[glycine-cleavage complex H protein] + CO2. The glycine cleavage system catalyzes the degradation of glycine. The P protein binds the alpha-amino group of glycine through its pyridoxal phosphate cofactor; CO(2) is released and the remaining methylamine moiety is then transferred to the lipoamide cofactor of the H protein. This Shigella dysenteriae serotype 1 (strain Sd197) protein is Glycine dehydrogenase (decarboxylating).